A 360-amino-acid polypeptide reads, in one-letter code: Complement control protein homolog (360 aa).

Residues 1-20 (MYTLHYICLVLSCVIYFVWT) form the signal peptide. Sushi domains follow at residues 21–81 (LSCP…KCQK), 82–144 (KKCS…ICDI), 145–207 (KKCK…KCEF), and 208–266 (IFCK…ECMK). Cystine bridges form between Cys-23-Cys-68, Cys-54-Cys-79, Cys-84-Cys-125, Cys-111-Cys-142, Cys-147-Cys-191, Cys-175-Cys-205, Cys-210-Cys-252, and Cys-238-Cys-264. 4 N-linked (GlcNAc...) asparagine; by host glycosylation sites follow: Asn-36, Asn-39, Asn-46, and Asn-72. Asn-155 is a glycosylation site (N-linked (GlcNAc...) asparagine; by host). An N-linked (GlcNAc...) asparagine; by host glycan is attached at Asn-294. The chain crosses the membrane as a helical span at residues 328-350 (GVLVIILTTSFIIIGIILTGVCL).

It belongs to the receptors of complement activation (RCA) family.

Its subcellular location is the membrane. The protein resides in the secreted. This chain is Complement control protein homolog (4), found in Saimiriine herpesvirus 2 (strain 11) (SaHV-2).